Reading from the N-terminus, the 339-residue chain is Protein H339R (339 aa).

Belongs to the asfivirus H339R family. As to quaternary structure, interacts with NACA (alpha chain of nascent polypeptide-associated complex).

The protein localises to the host cytoplasm. The protein resides in the host nucleus. It localises to the virion. The chain is Protein H339R from African swine fever virus (strain Badajoz 1971 Vero-adapted) (Ba71V).